The following is a 304-amino-acid chain: Acetylglutamate kinase (304 aa).

Substrate-binding positions include 71–72 (GG), Arg93, and Asn193.

Belongs to the acetylglutamate kinase family. ArgB subfamily.

The protein localises to the cytoplasm. It catalyses the reaction N-acetyl-L-glutamate + ATP = N-acetyl-L-glutamyl 5-phosphate + ADP. It functions in the pathway amino-acid biosynthesis; L-arginine biosynthesis; N(2)-acetyl-L-ornithine from L-glutamate: step 2/4. Functionally, catalyzes the ATP-dependent phosphorylation of N-acetyl-L-glutamate. This is Acetylglutamate kinase from Streptomyces avermitilis (strain ATCC 31267 / DSM 46492 / JCM 5070 / NBRC 14893 / NCIMB 12804 / NRRL 8165 / MA-4680).